Reading from the N-terminus, the 668-residue chain is SHC SH2 domain-binding protein 1 (668 aa).

Ala2 carries the N-acetylalanine modification. Residues Ser31, Ser44, and Ser273 each carry the phosphoserine modification. PbH1 repeat units follow at residues Gly428–His451, His452–Thr473, Ser474–Pro496, Gly497–Asp518, and Ile526–Lys548. Residue Ser630 is modified to Phosphoserine.

In terms of assembly, interacts directly with isoform p52shc of SHC1 via its SH2 domain. Interacts with TRIM71; leading to enhanced SHCBP1 protein stability. Interacts with both members of the centralspindlin complex, KIF23 and RACGAP1. Expressed in spleen, lung and heart with higher expression in testis. No expression in brain, liver and skeletal muscle. Elevated expression in actively cycling cells.

The protein localises to the midbody. It is found in the cytoplasm. The protein resides in the cytoskeleton. It localises to the spindle. Its function is as follows. May play a role in signaling pathways governing cellular proliferation, cell growth and differentiation. May be a component of a novel signaling pathway downstream of Shc. Acts as a positive regulator of FGF signaling in neural progenitor cells. The chain is SHC SH2 domain-binding protein 1 (Shcbp1) from Mus musculus (Mouse).